Consider the following 32-residue polypeptide: MSDIN-like toxin proprotein 1 (32 aa).

Residues 1–10 constitute a propeptide that is removed on maturation; it reads MSDINATRLP. A cross-link (cyclopeptide (Ile-Pro)) is located at residues 11-18; it reads IFWFIYFP. Residues 19-32 constitute a propeptide that is removed on maturation; that stretch reads CVSDVDSTLTRGER.

The protein belongs to the MSDIN fungal toxin family. Processed by the macrocyclase-peptidase enzyme POPB to yield a toxic cyclic octapeptide. POPB first removes 10 residues from the N-terminus. Conformational trapping of the remaining peptide forces the enzyme to release this intermediate rather than proceed to macrocyclization. The enzyme rebinds the remaining peptide in a different conformation and catalyzes macrocyclization of the N-terminal 8 residues. In terms of tissue distribution, expressed in basidiocarps.

Functionally, probable toxin that belongs to the MSDIN-like toxin family responsible for a large number of food poisoning cases and deaths. This chain is MSDIN-like toxin proprotein 1, found in Amanita exitialis (Guangzhou destroying angel).